The chain runs to 333 residues: Foldase protein PrsA (333 aa).

A signal peptide spans 1-21; it reads MKKRTIATGLVTLLSIVTLAA. Cysteine 22 is lipidated: N-palmitoyl cysteine. The S-diacylglycerol cysteine moiety is linked to residue cysteine 22. In terms of domain architecture, PpiC spans 144-237; the sequence is KPEVTAQVIQ…PVYYIVKITK (94 aa). The tract at residues 296–333 is disordered; it reads AASGSGSSGSTTTTTAASSAATTAADDQTTAAETTAAE.

This sequence belongs to the PrsA family.

The protein resides in the cell membrane. The enzyme catalyses [protein]-peptidylproline (omega=180) = [protein]-peptidylproline (omega=0). Functionally, plays a major role in protein secretion by helping the post-translocational extracellular folding of several secreted proteins. The polypeptide is Foldase protein PrsA (Streptococcus mutans serotype c (strain ATCC 700610 / UA159)).